We begin with the raw amino-acid sequence, 514 residues long: Citrate synthase 2, peroxisomal (514 aa).

Residues His324, His363, and Asp419 contribute to the active site.

This sequence belongs to the citrate synthase family. As to expression, widely expressed. Expressed throughout the shoot. Expressed in flower, silique, stem, cauline leaf, young leaf, mature leaf and senescent leaf.

It localises to the peroxisome. It catalyses the reaction oxaloacetate + acetyl-CoA + H2O = citrate + CoA + H(+). The protein operates within carbohydrate metabolism; tricarboxylic acid cycle; isocitrate from oxaloacetate: step 1/2. Its function is as follows. Peroxisomal citrate synthase required for the fatty acid respiration in seedlings, citrate being exported from peroxisomes into mitochondria during respiration of triacylglycerol (TAG). Indeed, complete respiration requires the transfer of carbon in the form of citrate from the peroxisome to the mitochondria. The sequence is that of Citrate synthase 2, peroxisomal (CSY2) from Arabidopsis thaliana (Mouse-ear cress).